A 1113-amino-acid chain; its full sequence is Protein translocase subunit SecA (1113 aa).

Residues glutamine 175, 193 to 197, and aspartate 694 each bind ATP; that span reads GEGKT. The span at 1042–1072 shows a compositional bias: basic and acidic residues; that stretch reads RHAAEQRTDMSKYRTQKDDIEAQQKAQRDAA. A disordered region spans residues 1042-1113; it reads RHAAEQRTDM…KFKQCHGRNL (72 aa). Cysteine 1097, cysteine 1099, cysteine 1108, and histidine 1109 together coordinate Zn(2+). The segment covering 1103-1113 has biased composition (basic residues); sequence KKFKQCHGRNL.

It belongs to the SecA family. As to quaternary structure, monomer and homodimer. Part of the essential Sec protein translocation apparatus which comprises SecA, SecYEG and auxiliary proteins SecDF. Other proteins may also be involved. Requires Zn(2+) as cofactor.

It localises to the cell inner membrane. The protein localises to the cytoplasm. The catalysed reaction is ATP + H2O + cellular proteinSide 1 = ADP + phosphate + cellular proteinSide 2.. Its function is as follows. Part of the Sec protein translocase complex. Interacts with the SecYEG preprotein conducting channel. Has a central role in coupling the hydrolysis of ATP to the transfer of proteins into and across the cell membrane, serving as an ATP-driven molecular motor driving the stepwise translocation of polypeptide chains across the membrane. The sequence is that of Protein translocase subunit SecA from Porphyromonas gingivalis (strain ATCC 33277 / DSM 20709 / CIP 103683 / JCM 12257 / NCTC 11834 / 2561).